The sequence spans 572 residues: Sialate:O-sulfotransferase 1 (572 aa).

The Cytoplasmic segment spans residues Met1–Arg14. The helical; Signal-anchor for type II membrane protein transmembrane segment at Thr15–Leu35 threads the bilayer. Over Gln36 to Arg572 the chain is Extracellular. N-linked (GlcNAc...) asparagine glycosylation occurs at Asn105. The segment at His116–Ala135 is disordered. 2 WSC domains span residues Gln139–Gly231 and Thr242–Cys337. 2 N-linked (GlcNAc...) asparagine glycosylation sites follow: Asn254 and Asn345.

The protein belongs to the WSCD family.

It localises to the golgi apparatus membrane. It catalyses the reaction a ganglioside GM1b + 3'-phosphoadenylyl sulfate = an 8-O-sulfo-ganglioside GM1b + adenosine 3',5'-bisphosphate + H(+). Sialate:O-sulfotransferase which catalyzes 8-O-sulfation at the Sia-glycan level using 3'-phosphoadenosine 5'-phosphosulfate (PAPS) as a donor, forming 8-O-sulfated Sia (Sia8S)-glycans. Displays selectivity toward glycolipids such as GM1 gangliosides. In Rattus norvegicus (Rat), this protein is Sialate:O-sulfotransferase 1 (Wscd1).